A 605-amino-acid chain; its full sequence is Glucose oxidase (605 aa).

Positions 1–18 (MVSVFLSTLLLAAATVQA) are cleaved as a signal peptide. FAD is bound by residues Leu-52, Thr-53, and Glu-73. N-linked (GlcNAc...) asparagine glycosylation occurs at Asn-111. FAD contacts are provided by Ser-125, Asn-129, Gly-130, and Ser-132. 2 N-linked (GlcNAc...) asparagine glycosylation sites follow: Asn-183 and Asn-190. Cys-186 and Cys-228 are joined by a disulfide. Residue Val-272 coordinates FAD. N-linked (GlcNAc...) asparagine glycans are attached at residues Asn-335, Asn-375, Asn-410, and Asn-519. Residue His-538 is the Proton acceptor of the active site. Residues Lys-559 and Val-560 each coordinate O2. FAD contacts are provided by Gly-571 and Met-583.

The protein belongs to the GMC oxidoreductase family. In terms of assembly, homodimer. Requires FAD as cofactor.

The protein resides in the secreted. It is found in the cell wall. Its subcellular location is the cytoplasmic vesicle. It catalyses the reaction beta-D-glucose + O2 = D-glucono-1,5-lactone + H2O2. Functionally, glucose oxidase catalyzes the oxidation of beta-D-glucose to D-glucono-delta-lactone and hydrogen peroxide in the presence of molecular oxygen. D-glucono-delta-lactone is sequentially hydrolyzed by lactonase to D-gluconic acid, and the resulting hydrogen peroxide is hydrolyzed by catalase to oxygen and water. Glucose oxidase alone indirectly causes toxicity in the presence of glucose and is the active compound of the antifungal antibiotic talaron. Responsible for inhibition of germination of microsclerotia of Verticillium dahliae. The polypeptide is Glucose oxidase (Talaromyces flavus).